The primary structure comprises 659 residues: uncharacterized protein (659 aa).

16 helical membrane passes run 24 to 44 (TTLM…YGLF), 71 to 91 (FGAS…VMMV), 115 to 135 (IGWL…DSGV), 157 to 177 (RAWI…RVII), 183 to 203 (FVLL…GNAG), 214 to 234 (AVIV…TAAL), 242 to 262 (AVLI…AELV), 279 to 299 (LGLV…WALV), 311 to 331 (LTAL…VQTA), 365 to 385 (FDSL…AGFV), 393 to 413 (TWPV…VFTS), 433 to 453 (MTLN…TLAL), 490 to 510 (FILF…DTLV), 517 to 537 (EFMA…IIGI), 550 to 570 (IGLL…LMTM), and 596 to 616 (IGGA…IVAL).

It to M.tuberculosis Rv0102.

It is found in the cell membrane. This is an uncharacterized protein from Mycobacterium leprae (strain TN).